Consider the following 213-residue polypeptide: Dephospho-CoA kinase (213 aa).

In terms of domain architecture, DPCK spans 3–202 (RIGLTGGIGS…QSYLALADKH (200 aa)). 11–16 (GSGKTR) contributes to the ATP binding site.

Belongs to the CoaE family.

It localises to the cytoplasm. The enzyme catalyses 3'-dephospho-CoA + ATP = ADP + CoA + H(+). It participates in cofactor biosynthesis; coenzyme A biosynthesis; CoA from (R)-pantothenate: step 5/5. Functionally, catalyzes the phosphorylation of the 3'-hydroxyl group of dephosphocoenzyme A to form coenzyme A. The polypeptide is Dephospho-CoA kinase (Bordetella avium (strain 197N)).